Here is a 172-residue protein sequence, read N- to C-terminus: 3-hydroxydecanoyl-[acyl-carrier-protein] dehydratase (172 aa).

Residue His71 is part of the active site.

It belongs to the thioester dehydratase family. FabA subfamily. Homodimer.

It localises to the cytoplasm. It carries out the reaction a (3R)-hydroxyacyl-[ACP] = a (2E)-enoyl-[ACP] + H2O. It catalyses the reaction (3R)-hydroxydecanoyl-[ACP] = (2E)-decenoyl-[ACP] + H2O. The enzyme catalyses (2E)-decenoyl-[ACP] = (3Z)-decenoyl-[ACP]. It participates in lipid metabolism; fatty acid biosynthesis. Necessary for the introduction of cis unsaturation into fatty acids. Catalyzes the dehydration of (3R)-3-hydroxydecanoyl-ACP to E-(2)-decenoyl-ACP and then its isomerization to Z-(3)-decenoyl-ACP. Can catalyze the dehydratase reaction for beta-hydroxyacyl-ACPs with saturated chain lengths up to 16:0, being most active on intermediate chain length. The chain is 3-hydroxydecanoyl-[acyl-carrier-protein] dehydratase from Proteus mirabilis (strain HI4320).